The following is a 481-amino-acid chain: SLVAVVITTFLYLIFRDSSPKGLPPGPKPWPIVGNLLQLGEKPHSQFAQLAETYGDLFSLKLGSETVVVASTPLAASEILKTHDRVLSGRYVFQSFRVKEHVENSIVWSECNETWKKLRKVCRTELFTQKMIESQAEVRESKAMEMVEYLKKNVGNEVKIAEVVFGTLVNIFGNLIFSQNIFKLGDESSGSVEMKEHLWRMLELGNSTNPADYFPFLGKFDLFGQSKDVADCLQGIYSVWGAMLKERKIAKQHNNSKKNDFVEILLDSGLDDQQINALLMEIFGAGTETSASTIEWALSELTKNPQVTANMRLELLSVVGKRPVKESDIPNMPYLQAFVKETLRLHPATPLLLPRRALETCKVLNYTIPKECQIMVNAWGIGRDPKRWTDPLKFSPERFLNSSIDFKGNDFELIPFGAGRRICPGVPLATQFISLIVSSLVQNFDWGFPKGMDPSQLIMEEKFGLTLQKEPPLYIVPKTRD.

C423 is a heme binding site.

The protein belongs to the cytochrome P450 family. The cofactor is heme. As to expression, restricted to the parietal region of sieve elements adjacent or proximal to laticifers in roots, stems, leaves, carpels and hypocotyls.

It is found in the endoplasmic reticulum. It carries out the reaction (S)-N-methylcoclaurine + reduced [NADPH--hemoprotein reductase] + O2 = (S)-3'-hydroxy-N-methylcoclaurine + oxidized [NADPH--hemoprotein reductase] + H2O + H(+). It functions in the pathway alkaloid biosynthesis; (S)-reticuline biosynthesis; (S)-reticuline from (S)-norcoclaurine: step 3/4. Functionally, cytochrome P450 monooxygenase involved in the biosynthesis of benzylisoquinoline alkaloids. Catalyzes the 3'-hydroxylation of (S)-N-methylcoclaurine. In Papaver somniferum (Opium poppy), this protein is (S)-N-methylcoclaurine 3'-hydroxylase isozyme 1.